We begin with the raw amino-acid sequence, 179 residues long: NADH-quinone oxidoreductase subunit B (179 aa).

[4Fe-4S] cluster contacts are provided by Cys-52, Cys-53, Cys-117, and Cys-147.

Belongs to the complex I 20 kDa subunit family. In terms of assembly, NDH-1 is composed of 14 different subunits. Subunits NuoB, C, D, E, F, and G constitute the peripheral sector of the complex. The cofactor is [4Fe-4S] cluster.

The protein resides in the cell inner membrane. The catalysed reaction is a quinone + NADH + 5 H(+)(in) = a quinol + NAD(+) + 4 H(+)(out). Functionally, NDH-1 shuttles electrons from NADH, via FMN and iron-sulfur (Fe-S) centers, to quinones in the respiratory chain. The immediate electron acceptor for the enzyme in this species is believed to be ubiquinone. Couples the redox reaction to proton translocation (for every two electrons transferred, four hydrogen ions are translocated across the cytoplasmic membrane), and thus conserves the redox energy in a proton gradient. The sequence is that of NADH-quinone oxidoreductase subunit B from Ehrlichia chaffeensis (strain ATCC CRL-10679 / Arkansas).